Reading from the N-terminus, the 243-residue chain is Triosephosphate isomerase (243 aa).

9–11 (NWK) contributes to the substrate binding site. His96 (electrophile) is an active-site residue. Catalysis depends on Glu165, which acts as the Proton acceptor. Substrate-binding positions include Gly171, Ser204, and 225–226 (GG).

This sequence belongs to the triosephosphate isomerase family. As to quaternary structure, homodimer.

Its subcellular location is the cytoplasm. The enzyme catalyses D-glyceraldehyde 3-phosphate = dihydroxyacetone phosphate. It participates in carbohydrate biosynthesis; gluconeogenesis. The protein operates within carbohydrate degradation; glycolysis; D-glyceraldehyde 3-phosphate from glycerone phosphate: step 1/1. In terms of biological role, involved in the gluconeogenesis. Catalyzes stereospecifically the conversion of dihydroxyacetone phosphate (DHAP) to D-glyceraldehyde-3-phosphate (G3P). The sequence is that of Triosephosphate isomerase from Parasynechococcus marenigrum (strain WH8102).